The primary structure comprises 470 residues: UDP-N-acetylmuramate--L-alanine ligase (470 aa).

118 to 124 (GTHGKTT) is an ATP binding site.

This sequence belongs to the MurCDEF family.

The protein resides in the cytoplasm. It carries out the reaction UDP-N-acetyl-alpha-D-muramate + L-alanine + ATP = UDP-N-acetyl-alpha-D-muramoyl-L-alanine + ADP + phosphate + H(+). Its pathway is cell wall biogenesis; peptidoglycan biosynthesis. Functionally, cell wall formation. This Cereibacter sphaeroides (strain ATCC 17029 / ATH 2.4.9) (Rhodobacter sphaeroides) protein is UDP-N-acetylmuramate--L-alanine ligase.